The primary structure comprises 156 residues: Enhancer of split M1 protein (156 aa).

The signal sequence occupies residues Met-1–Gly-19. Kazal-like domains follow at residues Ser-23–Ser-81 and Lys-96–Cys-156. 5 disulfide bridges follow: Cys-29/Cys-62, Cys-33/Cys-55, Cys-102/Cys-135, Cys-106/Cys-128, and Cys-114/Cys-156.

The chain is Enhancer of split M1 protein (Kaz-m1) from Drosophila melanogaster (Fruit fly).